We begin with the raw amino-acid sequence, 511 residues long: Alpha-amylase 1 (511 aa).

Positions 1 to 15 (MKFFLLLSLIGFCWA) are cleaved as a signal peptide. Gln-16 carries the pyrrolidone carboxylic acid modification. Cystine bridges form between Cys-43/Cys-101, Cys-85/Cys-130, and Cys-156/Cys-175. Positions 115, 173, and 182 each coordinate Ca(2+). A chloride-binding site is contributed by Arg-210. Asp-212 (nucleophile) is an active-site residue. A Ca(2+)-binding site is contributed by His-216. The active-site Proton donor is Glu-248. Positions 313 and 352 each coordinate chloride. 2 disulfides stabilise this stretch: Cys-393-Cys-399 and Cys-465-Cys-477.

It belongs to the glycosyl hydrolase 13 family. As to quaternary structure, monomer. Requires Ca(2+) as cofactor. Chloride serves as cofactor. Expressed in liver and saliva.

It localises to the secreted. It carries out the reaction Endohydrolysis of (1-&gt;4)-alpha-D-glucosidic linkages in polysaccharides containing three or more (1-&gt;4)-alpha-linked D-glucose units.. The sequence is that of Alpha-amylase 1 (Amy1) from Mus musculus (Mouse).